We begin with the raw amino-acid sequence, 168 residues long: Protein C2-DOMAIN ABA-RELATED 3 (168 aa).

Positions 1–106 constitute a C2 domain; sequence MSLMDNLLGI…IEALRMELSG (106 aa). R24, D25, D30, D76, H77, D78, and D84 together coordinate Ca(2+).

The protein belongs to the plant CAR protein family. In terms of assembly, binds to PYR/PYL/RCAR abscisic acid intracellular receptors in an ABA-independent manner, both at the plasma membrane and in the nucleus. It depends on Ca(2+) as a cofactor.

It is found in the cell membrane. Its subcellular location is the nucleus. Its function is as follows. Stimulates the GTPase/ATPase activities of Obg-like ATPases. Mediates the transient calcium-dependent interaction of PYR/PYL/RCAR abscisic acid (ABA) receptors with the plasma membrane and thus regulates ABA sensitivity. This is Protein C2-DOMAIN ABA-RELATED 3 from Arabidopsis thaliana (Mouse-ear cress).